The primary structure comprises 237 residues: MSTLDATRAELGLVVLYLNKAEARDKICRAIQYGSKFISNGQPGTAQDVDRSTTLARKVFRLLKWVNDLHGLISPPAKGTPLTLVLLGKSKNALLSTFLFLDQFVWLGRTGIYKNKERTDRIVRISLYCWMASSVCAGLVELGELKRLSKSMRKLARELRDTDKYENDQYKSKMKQSDERLLALVKAAMDVVVAVGLLQLSPKKITPRVTGAFGFVTSLISCYQQLPSRAPAIKVKA.

Residues 1-92 are Cytoplasmic-facing; it reads MSTLDATRAE…TLVLLGKSKN (92 aa). The helical transmembrane segment at 93–113 threads the bilayer; that stretch reads ALLSTFLFLDQFVWLGRTGIY. Residues 114–204 are Lumenal-facing; it reads KNKERTDRIV…VGLLQLSPKK (91 aa). A helical membrane pass occupies residues 205–223; sequence ITPRVTGAFGFVTSLISCY. Topologically, residues 224-237 are cytoplasmic; sequence QQLPSRAPAIKVKA.

It belongs to the peroxin-11 family. As to expression, expressed in seedlings, leaf sheaths, flag leaf, panicles and spikelets.

It localises to the peroxisome membrane. Its function is as follows. Involved in peroxisomal proliferation. The polypeptide is Peroxisomal membrane protein 11-1 (PEX11-1) (Oryza sativa subsp. japonica (Rice)).